The following is a 140-amino-acid chain: Nucleoside diphosphate kinase (140 aa).

Lys-11, Phe-59, Arg-87, Thr-93, Arg-104, and Asn-114 together coordinate ATP. The Pros-phosphohistidine intermediate role is filled by His-117.

This sequence belongs to the NDK family. Homotetramer. The cofactor is Mg(2+).

Its subcellular location is the cytoplasm. The enzyme catalyses a 2'-deoxyribonucleoside 5'-diphosphate + ATP = a 2'-deoxyribonucleoside 5'-triphosphate + ADP. The catalysed reaction is a ribonucleoside 5'-diphosphate + ATP = a ribonucleoside 5'-triphosphate + ADP. Functionally, major role in the synthesis of nucleoside triphosphates other than ATP. The ATP gamma phosphate is transferred to the NDP beta phosphate via a ping-pong mechanism, using a phosphorylated active-site intermediate. The polypeptide is Nucleoside diphosphate kinase (Sphingopyxis alaskensis (strain DSM 13593 / LMG 18877 / RB2256) (Sphingomonas alaskensis)).